The following is a 411-amino-acid chain: MQSWSSAPVPIVPGREPELRLYDTADRQVRPVAPGNTATMYVCGITPYDATHLGHAATYLAFDLIHRLWLDLGHEVRYVQNVTDVDDPLFERADRDGVDWRDLAAQEVALFREDMAALRVLSPHDYVGATEAVAEIIELVEKLLASGAAYVLDGEHPDVYYRSDATLQFGYESGYDRDTMLGLFEQRGGDPGRPGKNDALDALLWRAARPGEPSWPSPFGPGRPGWHIECAAIALSRVGSGLDVQGGGSDLIFPHHEFTAAHAECVTGEQRFARHYVHAGMIGWDGHKMSKSRGNLVLVSGLRAEGVNPAAVRLGLLAGHYRADRFWSQQVLDEAVGRLQRWRAATTLPAGPDAAAVVARVRQYLADDLNTPKAIAALDGWATDALDYGGHDEVAPRLVASTIDALLGVDL.

C43 lines the Zn(2+) pocket. L-cysteinyl-5'-AMP is bound by residues 43–46, T58, and 81–83; these read CGIT and NVT. Positions 45–55 match the 'HIGH' region motif; the sequence is ITPYDATHLGH. The 'ERGGDP' region signature appears at 186-191; sequence QRGGDP. Residue W226 coordinates L-cysteinyl-5'-AMP. Residue C230 participates in Zn(2+) binding. L-cysteinyl-5'-AMP is bound at residue 248-250; it reads GSD. H255 is a Zn(2+) binding site. I282 lines the L-cysteinyl-5'-AMP pocket. The 'KMSKS' region signature appears at 288–292; the sequence is KMSKS.

The protein belongs to the class-I aminoacyl-tRNA synthetase family. MshC subfamily. As to quaternary structure, monomer. Requires Zn(2+) as cofactor.

It carries out the reaction 1D-myo-inositol 2-amino-2-deoxy-alpha-D-glucopyranoside + L-cysteine + ATP = 1D-myo-inositol 2-(L-cysteinylamino)-2-deoxy-alpha-D-glucopyranoside + AMP + diphosphate + H(+). Catalyzes the ATP-dependent condensation of GlcN-Ins and L-cysteine to form L-Cys-GlcN-Ins. This is L-cysteine:1D-myo-inositol 2-amino-2-deoxy-alpha-D-glucopyranoside ligase from Mycobacterium ulcerans (strain Agy99).